We begin with the raw amino-acid sequence, 386 residues long: GLABROUS1 enhancer-binding protein-like 1 (386 aa).

2 disordered regions span residues 1-58 (MVTP…KKKK) and 197-314 (ESGE…DDDD). A compositionally biased stretch (basic and acidic residues) spans 216 to 226 (EEIRDNDETAR). Positions 221–285 (NDETARKAQQ…LKEHEEVANT (65 aa)) form a coiled coil. A compositionally biased stretch (polar residues) spans 257–267 (DNNGTTQIAQQ). Residues 291–300 (NGAAKTTENG) show a composition bias toward low complexity. The interval 354 to 375 (LSDEWKALCVEERRLNIKKLRF) is non-canonical leucine-zipper.

The protein belongs to the GeBP family. In terms of assembly, homo- and heterodimers. Interacts with GEBP, GPL2 and GPL3. Interacts with GEBP. Expressed in the apical meristem and young leaf primordia. Detected in the vascular tissues of cotyledons and leaves, in hydathodes and at the base of flowers and siliques, but not in roots.

It is found in the nucleus. Functionally, probable transcription factor. May play redundant roles with GEBP and GPL2 in cytokinin responses by regulating the transcript levels of type-A ARR response genes. Involved in stress responses. Plays a repressive role in cell expansion by counteracting the positive role of CPR5 in this process, but does not regulate cell proliferation or endoreduplication. In Arabidopsis thaliana (Mouse-ear cress), this protein is GLABROUS1 enhancer-binding protein-like 1.